We begin with the raw amino-acid sequence, 269 residues long: 4-hydroxy-tetrahydrodipicolinate reductase (269 aa).

NAD(+) contacts are provided by residues 9–14 and Glu35; that span reads GAGGRM. An NADP(+)-binding site is contributed by Arg36. Residues 98-100 and 122-125 contribute to the NAD(+) site; these read GTT and ASNY. His155 (proton donor/acceptor) is an active-site residue. His156 lines the (S)-2,3,4,5-tetrahydrodipicolinate pocket. Catalysis depends on Lys159, which acts as the Proton donor. (S)-2,3,4,5-tetrahydrodipicolinate is bound at residue 165-166; it reads GT.

The protein belongs to the DapB family.

It is found in the cytoplasm. It catalyses the reaction (S)-2,3,4,5-tetrahydrodipicolinate + NAD(+) + H2O = (2S,4S)-4-hydroxy-2,3,4,5-tetrahydrodipicolinate + NADH + H(+). The catalysed reaction is (S)-2,3,4,5-tetrahydrodipicolinate + NADP(+) + H2O = (2S,4S)-4-hydroxy-2,3,4,5-tetrahydrodipicolinate + NADPH + H(+). It participates in amino-acid biosynthesis; L-lysine biosynthesis via DAP pathway; (S)-tetrahydrodipicolinate from L-aspartate: step 4/4. In terms of biological role, catalyzes the conversion of 4-hydroxy-tetrahydrodipicolinate (HTPA) to tetrahydrodipicolinate. This chain is 4-hydroxy-tetrahydrodipicolinate reductase, found in Actinobacillus pleuropneumoniae serotype 7 (strain AP76).